Consider the following 512-residue polypeptide: UDP-N-acetylmuramoyl-L-alanyl-D-glutamate--2,6-diaminopimelate ligase (512 aa).

Ser32 is a binding site for UDP-N-acetyl-alpha-D-muramoyl-L-alanyl-D-glutamate. ATP is bound at residue 114–120 (GTNGKTT). UDP-N-acetyl-alpha-D-muramoyl-L-alanyl-D-glutamate contacts are provided by residues 156–157 (TT), Ser183, and Arg191. An N6-carboxylysine modification is found at Lys223. Residues Arg395, 419-422 (DNPR), Gly469, and Glu473 contribute to the meso-2,6-diaminopimelate site. A Meso-diaminopimelate recognition motif motif is present at residues 419–422 (DNPR).

It belongs to the MurCDEF family. MurE subfamily. Mg(2+) is required as a cofactor. Post-translationally, carboxylation is probably crucial for Mg(2+) binding and, consequently, for the gamma-phosphate positioning of ATP.

It is found in the cytoplasm. It catalyses the reaction UDP-N-acetyl-alpha-D-muramoyl-L-alanyl-D-glutamate + meso-2,6-diaminopimelate + ATP = UDP-N-acetyl-alpha-D-muramoyl-L-alanyl-gamma-D-glutamyl-meso-2,6-diaminopimelate + ADP + phosphate + H(+). The protein operates within cell wall biogenesis; peptidoglycan biosynthesis. Catalyzes the addition of meso-diaminopimelic acid to the nucleotide precursor UDP-N-acetylmuramoyl-L-alanyl-D-glutamate (UMAG) in the biosynthesis of bacterial cell-wall peptidoglycan. In Chlorobium phaeobacteroides (strain DSM 266 / SMG 266 / 2430), this protein is UDP-N-acetylmuramoyl-L-alanyl-D-glutamate--2,6-diaminopimelate ligase.